We begin with the raw amino-acid sequence, 762 residues long: Anhydrosialidase (762 aa).

The N-terminal stretch at 1–27 is a signal peptide; it reads MGRIGKKAMAIALVSAVMVTPLNVCAT. Arg293 provides a ligand contact to substrate. Residue Asp318 is the Proton acceptor of the active site. 3 BNR repeats span residues 328–339, 511–522, and 571–582; these read AKSTDGGNTWSE, RYSDDEGASWSD, and MYSDDHGDNWTY. Residue Glu595 is part of the active site. A substrate-binding site is contributed by Arg611. One copy of the BNR 4 repeat lies at 620–631; that stretch reads VTSIDGGETWSD. Arg673 is a substrate binding site. The Nucleophile role is filled by Tyr713.

This sequence belongs to the glycosyl hydrolase 33 family.

Its subcellular location is the secreted. It is found in the extracellular space. The enzyme catalyses Elimination of alpha-sialyl groups in N-acetylneuraminic acid glycosides, releasing 2,7-anhydro-alpha-N-acetylneuraminate.. The sequence is that of Anhydrosialidase from Macrobdella decora (North American leech).